A 245-amino-acid polypeptide reads, in one-letter code: Dehydrogenase/reductase SDR family member 6 (245 aa).

Residues 16–18 (QGI), Asp-37, and Asp-58 each bind NAD(+). Residue Arg-144 participates in substrate binding. Tyr-147 acts as the Proton acceptor in catalysis. NAD(+)-binding positions include Lys-151 and 180-184 (VDTPS). Residues Arg-188 and Arg-205 each contribute to the substrate site.

It belongs to the short-chain dehydrogenases/reductases (SDR) family. Homotetramer. As to expression, detected in liver (at protein level).

It is found in the cytoplasm. The enzyme catalyses cis-4-hydroxy-L-proline + NAD(+) = 4-oxo-L-proline + NADH + H(+). It carries out the reaction (R)-3-hydroxybutanoate + NAD(+) = acetoacetate + NADH + H(+). It functions in the pathway amino-acid metabolism. The protein operates within siderophore biosynthesis. Its function is as follows. NAD(H)-dependent dehydrogenase/reductase with a preference for cyclic substrates. Catalyzes stereoselective conversion of 4-oxo-L-proline to cis-4-hydroxy-L-proline, likely a detoxification mechanism for ketoprolines. Mediates the formation of 2,5-dihydroxybenzoate (2,5-DHBA), a siderophore that chelates free cytoplasmic iron and associates with LCN2, thereby regulating iron transport and homeostasis while protecting cells against free radical-induced oxidative stress. The iron-siderophore complex is imported into mitochondria, providing an iron source for mitochondrial metabolic processes in particular heme synthesis. May act as a 3-hydroxybutyrate dehydrogenase. The sequence is that of Dehydrogenase/reductase SDR family member 6 from Homo sapiens (Human).